The sequence spans 121 residues: Large ribosomal subunit protein bL12 (121 aa).

The protein belongs to the bacterial ribosomal protein bL12 family. Homodimer. Part of the ribosomal stalk of the 50S ribosomal subunit. Forms a multimeric L10(L12)X complex, where L10 forms an elongated spine to which 2 to 4 L12 dimers bind in a sequential fashion. Binds GTP-bound translation factors.

Forms part of the ribosomal stalk which helps the ribosome interact with GTP-bound translation factors. Is thus essential for accurate translation. The sequence is that of Large ribosomal subunit protein bL12 from Mesomycoplasma hyopneumoniae (strain 232) (Mycoplasma hyopneumoniae).